Consider the following 265-residue polypeptide: Flap endonuclease Xni (265 aa).

Residue Asp-111 coordinates Mg(2+). Residues 167 to 260 (VVPAQLVDFW…NLREIRYPPA (94 aa)) form the 5'-3' exonuclease domain. K(+) contacts are provided by Leu-178, Val-189, and Ile-192. The segment at 191-196 (GIGPKT) is interaction with DNA.

It belongs to the Xni family. Mg(2+) serves as cofactor. It depends on K(+) as a cofactor.

In terms of biological role, has flap endonuclease activity. During DNA replication, flap endonucleases cleave the 5'-overhanging flap structure that is generated by displacement synthesis when DNA polymerase encounters the 5'-end of a downstream Okazaki fragment. The protein is Flap endonuclease Xni of Aeromonas salmonicida (strain A449).